We begin with the raw amino-acid sequence, 298 residues long: Keratin-associated protein 10-11 (298 aa).

A run of 25 repeats spans residues cysteine 26–proline 30, cysteine 36–alanine 40, cysteine 57–alanine 61, cysteine 79–serine 83, cysteine 89–serine 93, cysteine 99–valine 103, cysteine 104–valine 108, cysteine 109–valine 113, cysteine 114–valine 118, cysteine 119–alanine 123, cysteine 126–serine 130, cysteine 136–serine 140, cysteine 146–valine 150, cysteine 151–valine 155, cysteine 156–threonine 160, cysteine 168–serine 172, cysteine 178–serine 182, cysteine 188–valine 192, cysteine 193–valine 197, cysteine 203–valine 207, cysteine 225–serine 229, cysteine 230–serine 234, cysteine 249–valine 253, cysteine 256–threonine 260, and cysteine 267–alanine 271. Positions cysteine 26 to alanine 271 are 25 X 5 AA repeats of C-C-X(3).

The protein belongs to the KRTAP type 10 family. As to quaternary structure, interacts with hair keratins. As to expression, restricted to a narrow region of the hair fiber cuticle, lying approximately 20 cell layers above the apex of the dermal papilla of the hair root; not detected in any other tissues.

In the hair cortex, hair keratin intermediate filaments are embedded in an interfilamentous matrix, consisting of hair keratin-associated proteins (KRTAP), which are essential for the formation of a rigid and resistant hair shaft through their extensive disulfide bond cross-linking with abundant cysteine residues of hair keratins. The matrix proteins include the high-sulfur and high-glycine-tyrosine keratins. The polypeptide is Keratin-associated protein 10-11 (KRTAP10-11) (Homo sapiens (Human)).